Consider the following 180-residue polypeptide: NADH-quinone oxidoreductase subunit I 1 (180 aa).

4Fe-4S ferredoxin-type domains are found at residues 50-80 (LSRD…LQKT) and 90-119 (EFFR…LTPD). 8 residues coordinate [4Fe-4S] cluster: Cys-60, Cys-63, Cys-66, Cys-70, Cys-99, Cys-102, Cys-105, and Cys-109.

Belongs to the complex I 23 kDa subunit family. NDH-1 is composed of 14 different subunits. Subunits NuoA, H, J, K, L, M, N constitute the membrane sector of the complex. [4Fe-4S] cluster is required as a cofactor.

Its subcellular location is the cell inner membrane. The enzyme catalyses a quinone + NADH + 5 H(+)(in) = a quinol + NAD(+) + 4 H(+)(out). In terms of biological role, NDH-1 shuttles electrons from NADH, via FMN and iron-sulfur (Fe-S) centers, to quinones in the respiratory chain. The immediate electron acceptor for the enzyme in this species is believed to be ubiquinone. Couples the redox reaction to proton translocation (for every two electrons transferred, four hydrogen ions are translocated across the cytoplasmic membrane), and thus conserves the redox energy in a proton gradient. This Nitrosococcus oceani (strain ATCC 19707 / BCRC 17464 / JCM 30415 / NCIMB 11848 / C-107) protein is NADH-quinone oxidoreductase subunit I 1.